Here is an 800-residue protein sequence, read N- to C-terminus: Endonuclease MutS2 (800 aa).

Residue 336-343 (GPNTGGKT) participates in ATP binding. Residues 725 to 800 (LDLRGVRYEA…GDGATIVELK (76 aa)) enclose the Smr domain.

This sequence belongs to the DNA mismatch repair MutS family. MutS2 subfamily. In terms of assembly, homodimer. Binds to stalled ribosomes, contacting rRNA.

Functionally, endonuclease that is involved in the suppression of homologous recombination and thus may have a key role in the control of bacterial genetic diversity. Acts as a ribosome collision sensor, splitting the ribosome into its 2 subunits. Detects stalled/collided 70S ribosomes which it binds and splits by an ATP-hydrolysis driven conformational change. Acts upstream of the ribosome quality control system (RQC), a ribosome-associated complex that mediates the extraction of incompletely synthesized nascent chains from stalled ribosomes and their subsequent degradation. Probably generates substrates for RQC. In Leuconostoc mesenteroides subsp. mesenteroides (strain ATCC 8293 / DSM 20343 / BCRC 11652 / CCM 1803 / JCM 6124 / NCDO 523 / NBRC 100496 / NCIMB 8023 / NCTC 12954 / NRRL B-1118 / 37Y), this protein is Endonuclease MutS2.